Consider the following 216-residue polypeptide: MRNAAGLFMIIEPDKAVLLCARRAYRSANAPAADMNDTFLEKISIPRGHRDCCDAKVYETAVREFVEETGRFFDSAFIYKLPFTLQWKDDGVTYKYLIYVGVVRGNLINVNAKPNTYTVKLLPGTFGNDYRIMLKPRRFNCEIARSLAIVPLNKYFNYMNDKQLITYDYSNYIEFFDFVRSVKARFDNRQLQDFFYATLKKIDNDAPQKLHALRRV.

A Nudix hydrolase domain is found at 1-177 (MRNAAGLFMI…DYSNYIEFFD (177 aa)). Positions 48-70 (GHRDCCDAKVYETAVREFVEETG) match the Nudix box motif.

The protein resides in the host cytoplasm. It localises to the host nucleus. It catalyses the reaction ADP-D-ribose + H2O = D-ribose 5-phosphate + AMP + 2 H(+). Functionally, plays an important role in virus replication most probably through its hydrolyzing ADP-ribose activity in host cells. May function in viral DNA replication or transcription directly, or by removing toxic substances or metabolic intermediates. The sequence is that of Protein ADP-ribose pyrophosphatase ORF38 from Lepidoptera (butterflies and moths).